We begin with the raw amino-acid sequence, 865 residues long: Protein translocase subunit SecA (865 aa).

ATP contacts are provided by residues Gln-93, 111-115 (GEGKT), and Asp-501. Residues Cys-841, Cys-843, Cys-852, and Cys-853 each coordinate Zn(2+).

It belongs to the SecA family. Monomer and homodimer. Part of the essential Sec protein translocation apparatus which comprises SecA, SecYEG and auxiliary proteins SecDF-YajC and YidC. Requires Zn(2+) as cofactor.

It localises to the cell inner membrane. The protein resides in the cytoplasm. It catalyses the reaction ATP + H2O + cellular proteinSide 1 = ADP + phosphate + cellular proteinSide 2.. Functionally, part of the Sec protein translocase complex. Interacts with the SecYEG preprotein conducting channel. Has a central role in coupling the hydrolysis of ATP to the transfer of proteins into and across the cell membrane, serving as an ATP-driven molecular motor driving the stepwise translocation of polypeptide chains across the membrane. This Helicobacter pylori (strain HPAG1) protein is Protein translocase subunit SecA.